We begin with the raw amino-acid sequence, 85 residues long: Phosphocarrier protein HPr (85 aa).

An HPr domain is found at 1–85; it reads MFQRDIKITT…DLAKFLTTLK (85 aa). Histidine 15 (pros-phosphohistidine intermediate) is an active-site residue.

The protein belongs to the HPr family.

It is found in the cytoplasm. Its function is as follows. General (non sugar-specific) component of the phosphoenolpyruvate-dependent sugar phosphotransferase system (sugar PTS). This major carbohydrate active-transport system catalyzes the phosphorylation of incoming sugar substrates concomitantly with their translocation across the cell membrane. The phosphoryl group from phosphoenolpyruvate (PEP) is transferred to the phosphoryl carrier protein HPr by enzyme I. Phospho-HPr then transfers it to the PTS EIIA domain. In Buchnera aphidicola subsp. Baizongia pistaciae (strain Bp), this protein is Phosphocarrier protein HPr (ptsH).